The sequence spans 266 residues: Arcelin-4 (266 aa).

The signal sequence occupies residues 1–21; the sequence is MGSSKLLSLALLLVLLTHANS. N-linked (GlcNAc...) asparagine glycosylation is found at Asn-28 and Asn-92.

Belongs to the leguminous lectin family.

Seed storage. This carbohydrate-binding lectin has toxic effects on the important bean bruchid pests, Z.subfasciatus and A.obtectus. This chain is Arcelin-4 (ARC4), found in Phaseolus vulgaris (Kidney bean).